A 262-amino-acid chain; its full sequence is Global transcriptional regulator CodY (262 aa).

The tract at residues 1–159 is GAF domain; that stretch reads MATLLEKTRK…ATTVIGVQLS (159 aa). Positions 207 to 226 form a DNA-binding region, H-T-H motif; sequence ASVIADKIGITRSVIVNALR.

The protein belongs to the CodY family.

Its subcellular location is the cytoplasm. In terms of biological role, DNA-binding global transcriptional regulator which is involved in the adaptive response to starvation and acts by directly or indirectly controlling the expression of numerous genes in response to nutrient availability. During rapid exponential growth, CodY is highly active and represses genes whose products allow adaptation to nutrient depletion. This is Global transcriptional regulator CodY from Lactococcus lactis subsp. cremoris (strain SK11).